The chain runs to 467 residues: Ethanolamine-phosphate phospho-lyase homolog 1 (467 aa).

Lysine 307 carries the post-translational modification N6-(pyridoxal phosphate)lysine.

Belongs to the class-III pyridoxal-phosphate-dependent aminotransferase family. Pyridoxal 5'-phosphate is required as a cofactor.

This chain is Ethanolamine-phosphate phospho-lyase homolog 1, found in Caenorhabditis elegans.